A 287-amino-acid chain; its full sequence is Shikimate dehydrogenase (NADP(+)) (287 aa).

Shikimate contacts are provided by residues 20 to 22 and threonine 67; that span reads SRS. Lysine 71 (proton acceptor) is an active-site residue. Residue glutamate 84 coordinates NADP(+). The shikimate site is built by asparagine 93 and aspartate 108. NADP(+)-binding positions include 132 to 136, 156 to 161, and methionine 226; these read GAGGA and NRTAAR. Shikimate is bound at residue tyrosine 228. NADP(+) is bound at residue glycine 250.

This sequence belongs to the shikimate dehydrogenase family. In terms of assembly, homodimer.

The enzyme catalyses shikimate + NADP(+) = 3-dehydroshikimate + NADPH + H(+). Its pathway is metabolic intermediate biosynthesis; chorismate biosynthesis; chorismate from D-erythrose 4-phosphate and phosphoenolpyruvate: step 4/7. Its function is as follows. Involved in the biosynthesis of the chorismate, which leads to the biosynthesis of aromatic amino acids. Catalyzes the reversible NADPH linked reduction of 3-dehydroshikimate (DHSA) to yield shikimate (SA). This Bordetella pertussis (strain Tohama I / ATCC BAA-589 / NCTC 13251) protein is Shikimate dehydrogenase (NADP(+)).